We begin with the raw amino-acid sequence, 494 residues long: One cut domain family member 3 (494 aa).

Disordered regions lie at residues 130–162 (AAAV…RLAA), 199–239 (LSPL…GDKL), and 295–319 (AHGP…AAAE). Composition is skewed to pro residues over residues 148 to 158 (AAAPPPPPPPQ) and 214 to 225 (PQPPPPPPPPPL). Over residues 297-313 (GPHGGGGGPGGSGGGPS) the composition is skewed to gly residues. A DNA-binding region (CUT) is located at residues 312–398 (PSAGAAAEEI…QRMSALRLAA (87 aa)). Residues 414–473 (PKKQRLVFTDLQRRTLIAIFKENKRPSKEMQVTISQQLGLELNTVSNFFMNARRRCMNRW) constitute a DNA-binding region (homeobox). The interval 475-494 (EEPSTAPGGPAGATATFSKA) is disordered. Positions 476-494 (EPSTAPGGPAGATATFSKA) are enriched in low complexity.

Belongs to the CUT homeobox family.

The protein localises to the nucleus. Its function is as follows. Transcriptional activator. Binds the consensus DNA sequence 5'-DHWATTGAYTWWD-3' on a variety of gene promoters such as those of HNF3B and TTR. The sequence is that of One cut domain family member 3 (ONECUT3) from Homo sapiens (Human).